The sequence spans 498 residues: Neoxanthin synthase, chloroplastic (498 aa).

The N-terminal 33 residues, 1–33 (METLLKPLTSLLLSSPTPHRSIFQQNPPSLNPT), are a transit peptide targeting the chloroplast. Residues 16–38 (PTPHRSIFQQNPPSLNPTTKKKS) form a disordered region. The span at 22-33 (IFQQNPPSLNPT) shows a compositional bias: polar residues. 84 to 112 (VIIIGAGPAGLRLAEHVSKYGIKVCCVDP) serves as a coordination point for NAD(+).

Belongs to the lycopene cyclase family.

Its subcellular location is the plastid. It localises to the chloroplast. It catalyses the reaction all-trans-violaxanthin = all-trans-neoxanthin. Its pathway is carotenoid biosynthesis; neoxanthin biosynthesis. In terms of biological role, involved in the synthesis of neoxanthin, the last product of carotenoid synthesis and a precursor of abscisic acid. This Solanum tuberosum (Potato) protein is Neoxanthin synthase, chloroplastic (NXS).